Here is a 319-residue protein sequence, read N- to C-terminus: Major intracellular serine protease (319 aa).

Residues 1–17 (MNGEIRLIPYVTNEQIM) constitute a propeptide that is removed on maturation. Residues 23 to 307 (PEGIKVIKAP…FLYLTAPDEL (285 aa)) enclose the Peptidase S8 domain. Active-site charge relay system residues include Asp-50, His-87, and Ser-246.

It belongs to the peptidase S8 family. Homodimer.

The protein localises to the cytoplasm. In terms of biological role, major intracellular protease produced by Bacillus subtilis. This chain is Major intracellular serine protease (isp), found in Bacillus subtilis (strain 168).